The sequence spans 88 residues: Beta-insect excitatory toxin 2 (88 aa).

An N-terminal signal peptide occupies residues M1–G18. Residues K20–D83 enclose the LCN-type CS-alpha/beta domain. 4 disulfides stabilise this stretch: C34–C55, C40–C60, C44–C62, and C56–C82.

This sequence belongs to the long (4 C-C) scorpion toxin superfamily. Sodium channel inhibitor family. Beta subfamily. In terms of tissue distribution, expressed by the venom gland.

It is found in the secreted. Functionally, excitatory insect beta-toxins induce a spastic paralysis. They bind voltage-independently at site-4 of sodium channels (Nav) and shift the voltage of activation toward more negative potentials thereby affecting sodium channel activation and promoting spontaneous and repetitive firing. This toxin is active only on insects. This is Beta-insect excitatory toxin 2 from Androctonus australis (Sahara scorpion).